Consider the following 128-residue polypeptide: Ribosome-binding factor A (128 aa).

Belongs to the RbfA family. In terms of assembly, monomer. Binds 30S ribosomal subunits, but not 50S ribosomal subunits or 70S ribosomes.

It localises to the cytoplasm. In terms of biological role, one of several proteins that assist in the late maturation steps of the functional core of the 30S ribosomal subunit. Associates with free 30S ribosomal subunits (but not with 30S subunits that are part of 70S ribosomes or polysomes). Required for efficient processing of 16S rRNA. May interact with the 5'-terminal helix region of 16S rRNA. The protein is Ribosome-binding factor A of Pseudomonas paraeruginosa (strain DSM 24068 / PA7) (Pseudomonas aeruginosa (strain PA7)).